We begin with the raw amino-acid sequence, 738 residues long: Dipeptidyl peptidase 3 (738 aa).

Alanine 2 carries the N-acetylalanine modification. Histidine 450 provides a ligand contact to Zn(2+). Glutamate 451 is a catalytic residue. Residues histidine 455 and glutamate 508 each coordinate Zn(2+).

This sequence belongs to the peptidase M49 family. It depends on Zn(2+) as a cofactor.

Its subcellular location is the cytoplasm. The protein resides in the cytosol. The enzyme catalyses Release of an N-terminal dipeptide from a peptide comprising four or more residues, with broad specificity. Also acts on dipeptidyl 2-naphthylamides.. In terms of biological role, cleaves and degrades bioactive peptides, including angiotensin, Leu-enkephalin and Met-enkephalin. Also cleaves Arg-Arg-beta-naphthylamide (in vitro). The protein is Dipeptidyl peptidase 3 (Dpp3) of Mus musculus (Mouse).